A 419-amino-acid chain; its full sequence is UDP-N-acetylglucosamine 1-carboxyvinyltransferase (419 aa).

Position 22–23 (22–23 (KN)) interacts with phosphoenolpyruvate. Arg-91 contributes to the UDP-N-acetyl-alpha-D-glucosamine binding site. The Proton donor role is filled by Cys-115. The residue at position 115 (Cys-115) is a 2-(S-cysteinyl)pyruvic acid O-phosphothioketal. Residues 120-124 (RPVDL), 160-163 (KVSV), Asp-305, and Val-327 contribute to the UDP-N-acetyl-alpha-D-glucosamine site.

The protein belongs to the EPSP synthase family. MurA subfamily.

Its subcellular location is the cytoplasm. It catalyses the reaction phosphoenolpyruvate + UDP-N-acetyl-alpha-D-glucosamine = UDP-N-acetyl-3-O-(1-carboxyvinyl)-alpha-D-glucosamine + phosphate. The protein operates within cell wall biogenesis; peptidoglycan biosynthesis. Its function is as follows. Cell wall formation. Adds enolpyruvyl to UDP-N-acetylglucosamine. In Escherichia coli (strain K12 / MC4100 / BW2952), this protein is UDP-N-acetylglucosamine 1-carboxyvinyltransferase.